Reading from the N-terminus, the 240-residue chain is 1-(5-phosphoribosyl)-5-[(5-phosphoribosylamino)methylideneamino] imidazole-4-carboxamide isomerase (240 aa).

D8 (proton acceptor) is an active-site residue. Catalysis depends on D129, which acts as the Proton donor.

This sequence belongs to the HisA/HisF family.

It localises to the cytoplasm. The catalysed reaction is 1-(5-phospho-beta-D-ribosyl)-5-[(5-phospho-beta-D-ribosylamino)methylideneamino]imidazole-4-carboxamide = 5-[(5-phospho-1-deoxy-D-ribulos-1-ylimino)methylamino]-1-(5-phospho-beta-D-ribosyl)imidazole-4-carboxamide. It functions in the pathway amino-acid biosynthesis; L-histidine biosynthesis; L-histidine from 5-phospho-alpha-D-ribose 1-diphosphate: step 4/9. The sequence is that of 1-(5-phosphoribosyl)-5-[(5-phosphoribosylamino)methylideneamino] imidazole-4-carboxamide isomerase from Oceanobacillus iheyensis (strain DSM 14371 / CIP 107618 / JCM 11309 / KCTC 3954 / HTE831).